The sequence spans 259 residues: Ribonuclease PH (259 aa).

Phosphate-binding positions include R88 and 126–128 (GTR).

It belongs to the RNase PH family. As to quaternary structure, homohexameric ring arranged as a trimer of dimers.

The enzyme catalyses tRNA(n+1) + phosphate = tRNA(n) + a ribonucleoside 5'-diphosphate. Functionally, phosphorolytic 3'-5' exoribonuclease that plays an important role in tRNA 3'-end maturation. Removes nucleotide residues following the 3'-CCA terminus of tRNAs; can also add nucleotides to the ends of RNA molecules by using nucleoside diphosphates as substrates, but this may not be physiologically important. Probably plays a role in initiation of 16S rRNA degradation (leading to ribosome degradation) during starvation. In Mycobacterium bovis (strain BCG / Pasteur 1173P2), this protein is Ribonuclease PH.